The primary structure comprises 105 residues: Large ribosomal subunit protein bL21 (105 aa).

This sequence belongs to the bacterial ribosomal protein bL21 family. In terms of assembly, part of the 50S ribosomal subunit. Contacts protein L20.

Its function is as follows. This protein binds to 23S rRNA in the presence of protein L20. The protein is Large ribosomal subunit protein bL21 of Rickettsia typhi (strain ATCC VR-144 / Wilmington).